We begin with the raw amino-acid sequence, 241 residues long: Carboxy-S-adenosyl-L-methionine synthase (241 aa).

S-adenosyl-L-methionine contacts are provided by residues tyrosine 38, 63–65 (GCS), 88–89 (DN), 116–117 (DI), asparagine 131, and arginine 198.

Belongs to the class I-like SAM-binding methyltransferase superfamily. Cx-SAM synthase family. In terms of assembly, homodimer.

The enzyme catalyses prephenate + S-adenosyl-L-methionine = carboxy-S-adenosyl-L-methionine + 3-phenylpyruvate + H2O. Its function is as follows. Catalyzes the conversion of S-adenosyl-L-methionine (SAM) to carboxy-S-adenosyl-L-methionine (Cx-SAM). This Histophilus somni (strain 129Pt) (Haemophilus somnus) protein is Carboxy-S-adenosyl-L-methionine synthase.